A 32-amino-acid polypeptide reads, in one-letter code: MASEIFGTAAIFWVLIPAGLLGGALLLKLQGE.

A helical membrane pass occupies residues 5 to 25 (IFGTAAIFWVLIPAGLLGGAL).

The protein belongs to the PetM family. In terms of assembly, the 4 large subunits of the cytochrome b6-f complex are cytochrome b6, subunit IV (17 kDa polypeptide, PetD), cytochrome f and the Rieske protein, while the 4 small subunits are PetG, PetL, PetM and PetN. The complex functions as a dimer.

The protein localises to the cellular thylakoid membrane. Its function is as follows. Component of the cytochrome b6-f complex, which mediates electron transfer between photosystem II (PSII) and photosystem I (PSI), cyclic electron flow around PSI, and state transitions. This chain is Cytochrome b6-f complex subunit 7, found in Prochlorococcus marinus (strain SARG / CCMP1375 / SS120).